Consider the following 684-residue polypeptide: Phenoloxidase 1 (684 aa).

Positions 1-50 are cleaved as a propeptide — removed by PPAF1; the sequence is MSDKNKLLLLFDRPLETVIVPRGPDQEAFDVPVDLLSDRYKAIGVQVSNR. A glycan (N-linked (GlcNAc...) asparagine) is linked at Asn-80. Cu cation is bound by residues His-208, His-212, and His-237. The Proton acceptor role is filled by Glu-349. N-linked (GlcNAc...) asparagine glycosylation is found at Asn-352 and Asn-356. His-364, His-368, and His-404 together coordinate Cu cation. Residues Asn-486, Asn-491, and Asn-545 are each glycosylated (N-linked (GlcNAc...) asparagine). Disulfide bonds link Cys-579-Cys-621 and Cys-581-Cys-628.

It belongs to the tyrosinase family. Dimer. Might form a homodimer or a heterodimer with PPO1. Might interact with PPAF2 (via CLIP domain); the interaction might be required for PPO1 activity. Cu(2+) serves as cofactor. In terms of processing, propeptide cleaved by PPAF1. Hemocytes.

The protein localises to the secreted. Functionally, this is a copper-containing oxidase that functions in the formation of pigments such as melanins and other polyphenolic compounds. Catalyzes the oxidation of o-diphenols (N-acetyldopamine, 4-methylcatechol and dopamine). Cannot oxidize monophenols and p-phenols (L-tyrosine, tyramine, gentisic acid and hydroquinone). Binds to the surface of hemocytes and is involved in hemocyte melanization. Activation of the enzyme in response to bacterial lipopolysaccharides (LPS) suggests it may play a role in innate immunity. This chain is Phenoloxidase 1, found in Holotrichia diomphalia (Korean black chafer).